A 458-amino-acid polypeptide reads, in one-letter code: MPN domain-containing protein (458 aa).

The interval 1-37 (MGSEPPSSPQVVEEGADEEDEELSGAEDADLRSSSGR) is disordered. The segment covering 14-28 (EGADEEDEELSGAED) has biased composition (acidic residues). Residues 42–137 (TRRGITLRVL…QYKTTWLHKY (96 aa)) form the RAMA domain. The DNA site is built by Ser-94, Ser-96, and Trp-116. The interval 147–175 (SEGEDDEMGDDDEEEGKTTIPVEDKNKKS) is disordered. Positions 148–161 (EGEDDEMGDDDEEE) are enriched in acidic residues. Positions 229-364 (VAVSSNVLLL…VASTITPFWV (136 aa)) constitute an MPN domain. The Zn(2+) site is built by His-306, His-308, and Asp-319. A JAMM motif motif is present at residues 306–319 (HSHPRGPALPSLQD).

Belongs to the peptidase M67 family. Post-translationally, degraded following binding to N(6)-methyladenosine methylated DNA (m6A).

Probable protease. Acts as a sensor of N(6)-methyladenosine methylation on DNA (m6A): recognizes and binds m6A DNA, leading to its degradation. Binds only double strand DNA (dsDNA) in a sequence-independent manner. The polypeptide is MPN domain-containing protein (Danio rerio (Zebrafish)).